The following is a 224-amino-acid chain: UPF0758 protein Neut_0782 (224 aa).

Residues 102–224 enclose the MPN domain; that stretch reads IMDSPQSVRS…TVSFAERGLI (123 aa). Positions 173, 175, and 186 each coordinate Zn(2+). The JAMM motif motif lies at 173–186; the sequence is HNHPSGVAEPSRAD.

It belongs to the UPF0758 family.

The sequence is that of UPF0758 protein Neut_0782 from Nitrosomonas eutropha (strain DSM 101675 / C91 / Nm57).